Consider the following 370-residue polypeptide: Cyanuric acid amidohydrolase (370 aa).

The interval 1-103 is RU A; it reads MQAQVFRVPM…TIFTVQKTDN (103 aa). Substrate-binding positions include Arg-51 and 82–83; that span reads SG. An RU B region spans residues 113-250; the sequence is RLAVQQIFTR…NEIIVMGNSR (138 aa). The active site involves Lys-163. Residues Arg-195 and 233-234 each bind substrate; that span reads SA. The Nucleophile role is filled by Ser-233. The segment at 256-370 is RU C; it reads LVIGHAEMKD…GPVAVIARTA (115 aa). Glu-303 provides a ligand contact to Mg(2+). Residues Arg-330 and 349 to 350 each bind substrate; that span reads SG. Residues Ser-352, Gln-355, Gly-356, Pro-357, and Gly-360 each contribute to the Mg(2+) site.

The protein belongs to the cyclic amide hydrolase (CyAH) family. As to quaternary structure, homotetramer.

It catalyses the reaction cyanurate + H2O = 1-carboxybiuret + H(+). Its pathway is xenobiotic degradation; atrazine degradation; biuret from cyanurate: step 1/1. Its activity is regulated as follows. Inhibited by barbituric acid. Functionally, responsible for the hydrolysis of cyanuric acid, an intermediate formed during catabolism of s-triazine based compounds in herbicides such as atrazine and polymers such as melamine. Catalyzes the hydrolytic opening of the s-triazine ring of cyanuric acid (2,4,6-trihydroxy-s-triazine) to yield carbon dioxide and carboxybiuret, which spontaneously decarboxylates to biuret. This chain is Cyanuric acid amidohydrolase (trzD), found in Pseudomonas sp.